A 186-amino-acid chain; its full sequence is Elongation factor P (186 aa).

This sequence belongs to the elongation factor P family.

The protein localises to the cytoplasm. It functions in the pathway protein biosynthesis; polypeptide chain elongation. Functionally, involved in peptide bond synthesis. Stimulates efficient translation and peptide-bond synthesis on native or reconstituted 70S ribosomes in vitro. Probably functions indirectly by altering the affinity of the ribosome for aminoacyl-tRNA, thus increasing their reactivity as acceptors for peptidyl transferase. In Shewanella sp. (strain ANA-3), this protein is Elongation factor P.